The sequence spans 476 residues: Serine/threonine-protein kinase sax-1 (476 aa).

The Protein kinase domain occupies 87 to 381 (FESLKVIGRG…LDEIKQCPFV (295 aa)). ATP contacts are provided by residues 93–101 (IGRGAFGEV) and lysine 116. The Proton acceptor role is filled by aspartate 210. One can recognise an AGC-kinase C-terminal domain in the interval 382-452 (KRIDWNHIRE…KRFDGLTQKM (71 aa)).

Belongs to the protein kinase superfamily. AGC Ser/Thr protein kinase family. Requires Mg(2+) as cofactor. Widely expressed in embryonic and larval neurons that contribute axons to the nerve ring and in hypodermal cells, including lateral seam cells. Also displays a punctate localization in muscle.

The protein resides in the cytoplasm. It localises to the nucleus. It carries out the reaction L-seryl-[protein] + ATP = O-phospho-L-seryl-[protein] + ADP + H(+). The enzyme catalyses L-threonyl-[protein] + ATP = O-phospho-L-threonyl-[protein] + ADP + H(+). Its function is as follows. Acts with sax-2 to restrict the growth of both primary and secondary neurites. Regulates mechanosensory tiling by controlling the termination point of sensory dendrites. In Caenorhabditis elegans, this protein is Serine/threonine-protein kinase sax-1.